Consider the following 265-residue polypeptide: Probable cyclic nucleotide phosphodiesterase SynWH7803_1390 (265 aa).

The Fe cation site is built by aspartate 9, histidine 11, aspartate 49, asparagine 86, histidine 157, histidine 196, and histidine 198. AMP is bound by residues histidine 11, aspartate 49, and 86–87 (NH). Residue histidine 198 participates in AMP binding.

The protein belongs to the cyclic nucleotide phosphodiesterase class-III family. Fe(2+) is required as a cofactor.

The polypeptide is Probable cyclic nucleotide phosphodiesterase SynWH7803_1390 (Synechococcus sp. (strain WH7803)).